The sequence spans 200 residues: Large ribosomal subunit protein uL4 (200 aa).

The disordered stretch occupies residues 38-72 (GRQGTKQQKTRSDVAGGGKRPWRQKGTGRARAGTT).

Belongs to the universal ribosomal protein uL4 family. Part of the 50S ribosomal subunit.

In terms of biological role, one of the primary rRNA binding proteins, this protein initially binds near the 5'-end of the 23S rRNA. It is important during the early stages of 50S assembly. It makes multiple contacts with different domains of the 23S rRNA in the assembled 50S subunit and ribosome. Functionally, forms part of the polypeptide exit tunnel. This Pseudomonas entomophila (strain L48) protein is Large ribosomal subunit protein uL4.